Here is a 93-residue protein sequence, read N- to C-terminus: Small ribosomal subunit protein uS19 (93 aa).

The protein belongs to the universal ribosomal protein uS19 family.

In terms of biological role, protein S19 forms a complex with S13 that binds strongly to the 16S ribosomal RNA. This chain is Small ribosomal subunit protein uS19, found in Nautilia profundicola (strain ATCC BAA-1463 / DSM 18972 / AmH).